A 379-amino-acid chain; its full sequence is Cytochrome b (379 aa).

4 helical membrane-spanning segments follow: residues 33–53, 77–98, 113–133, and 178–198; these read FGSL…FLAM, WTIR…FIHV, WNIG…GYVL, and FFAL…IHLL. Residues H83 and H97 each contribute to the heme b site. Residues H182 and H196 each contribute to the heme b site. H201 is a binding site for a ubiquinone. 4 helical membrane-spanning segments follow: residues 226–246, 288–308, 320–340, and 347–367; these read TKDF…TLFY, LGGV…PFLQ, LSQF…WIGG, and FINI…FIMP.

The protein belongs to the cytochrome b family. As to quaternary structure, the cytochrome bc1 complex contains 11 subunits: 3 respiratory subunits (MT-CYB, CYC1 and UQCRFS1), 2 core proteins (UQCRC1 and UQCRC2) and 6 low-molecular weight proteins (UQCRH/QCR6, UQCRB/QCR7, UQCRQ/QCR8, UQCR10/QCR9, UQCR11/QCR10 and a cleavage product of UQCRFS1). This cytochrome bc1 complex then forms a dimer. The cofactor is heme b.

The protein resides in the mitochondrion inner membrane. In terms of biological role, component of the ubiquinol-cytochrome c reductase complex (complex III or cytochrome b-c1 complex) that is part of the mitochondrial respiratory chain. The b-c1 complex mediates electron transfer from ubiquinol to cytochrome c. Contributes to the generation of a proton gradient across the mitochondrial membrane that is then used for ATP synthesis. The protein is Cytochrome b (MT-CYB) of Lepilemur aeeclis (Sportive lemur).